The sequence spans 288 residues: ATP synthase gamma chain (288 aa).

Belongs to the ATPase gamma chain family. As to quaternary structure, F-type ATPases have 2 components, CF(1) - the catalytic core - and CF(0) - the membrane proton channel. CF(1) has five subunits: alpha(3), beta(3), gamma(1), delta(1), epsilon(1). CF(0) has three main subunits: a, b and c.

Its subcellular location is the cell inner membrane. Produces ATP from ADP in the presence of a proton gradient across the membrane. The gamma chain is believed to be important in regulating ATPase activity and the flow of protons through the CF(0) complex. The chain is ATP synthase gamma chain from Rickettsia bellii (strain OSU 85-389).